We begin with the raw amino-acid sequence, 616 residues long: Dihydroxy-acid dehydratase (616 aa).

Residue Asp-81 participates in Mg(2+) binding. [2Fe-2S] cluster is bound at residue Cys-122. Mg(2+)-binding residues include Asp-123 and Lys-124. Lys-124 is subject to N6-carboxylysine. Cys-195 serves as a coordination point for [2Fe-2S] cluster. Glu-491 is a Mg(2+) binding site. Catalysis depends on Ser-517, which acts as the Proton acceptor.

Belongs to the IlvD/Edd family. Homodimer. It depends on [2Fe-2S] cluster as a cofactor. The cofactor is Mg(2+).

It catalyses the reaction (2R)-2,3-dihydroxy-3-methylbutanoate = 3-methyl-2-oxobutanoate + H2O. It carries out the reaction (2R,3R)-2,3-dihydroxy-3-methylpentanoate = (S)-3-methyl-2-oxopentanoate + H2O. It functions in the pathway amino-acid biosynthesis; L-isoleucine biosynthesis; L-isoleucine from 2-oxobutanoate: step 3/4. The protein operates within amino-acid biosynthesis; L-valine biosynthesis; L-valine from pyruvate: step 3/4. Functions in the biosynthesis of branched-chain amino acids. Catalyzes the dehydration of (2R,3R)-2,3-dihydroxy-3-methylpentanoate (2,3-dihydroxy-3-methylvalerate) into 2-oxo-3-methylpentanoate (2-oxo-3-methylvalerate) and of (2R)-2,3-dihydroxy-3-methylbutanoate (2,3-dihydroxyisovalerate) into 2-oxo-3-methylbutanoate (2-oxoisovalerate), the penultimate precursor to L-isoleucine and L-valine, respectively. This Shewanella woodyi (strain ATCC 51908 / MS32) protein is Dihydroxy-acid dehydratase.